Reading from the N-terminus, the 687-residue chain is Putative secreted metallopeptidase (687 aa).

Positions 1-22 are cleaved as a signal peptide; sequence MLFTSTAVAALSGALLIQPALA. Residues Asn54, Asn114, Asn252, Asn256, and Asn379 are each glycosylated (N-linked (GlcNAc...) asparagine).

This sequence belongs to the peptidase M10B family.

The protein localises to the secreted. This is Putative secreted metallopeptidase from Arthroderma benhamiae (strain ATCC MYA-4681 / CBS 112371) (Trichophyton mentagrophytes).